A 157-amino-acid polypeptide reads, in one-letter code: SsrA-binding protein (157 aa).

The disordered stretch occupies residues 133 to 157 (LHDKRESEKKRDWGREKGRLLRARG). The span at 135 to 151 (DKRESEKKRDWGREKGR) shows a compositional bias: basic and acidic residues.

The protein belongs to the SmpB family.

It is found in the cytoplasm. In terms of biological role, required for rescue of stalled ribosomes mediated by trans-translation. Binds to transfer-messenger RNA (tmRNA), required for stable association of tmRNA with ribosomes. tmRNA and SmpB together mimic tRNA shape, replacing the anticodon stem-loop with SmpB. tmRNA is encoded by the ssrA gene; the 2 termini fold to resemble tRNA(Ala) and it encodes a 'tag peptide', a short internal open reading frame. During trans-translation Ala-aminoacylated tmRNA acts like a tRNA, entering the A-site of stalled ribosomes, displacing the stalled mRNA. The ribosome then switches to translate the ORF on the tmRNA; the nascent peptide is terminated with the 'tag peptide' encoded by the tmRNA and targeted for degradation. The ribosome is freed to recommence translation, which seems to be the essential function of trans-translation. The chain is SsrA-binding protein from Bradyrhizobium sp. (strain ORS 278).